The primary structure comprises 430 residues: Glutamate-1-semialdehyde 2,1-aminomutase (430 aa).

Lys-265 is subject to N6-(pyridoxal phosphate)lysine.

Belongs to the class-III pyridoxal-phosphate-dependent aminotransferase family. HemL subfamily. Homodimer. The cofactor is pyridoxal 5'-phosphate.

It is found in the cytoplasm. It catalyses the reaction (S)-4-amino-5-oxopentanoate = 5-aminolevulinate. It functions in the pathway porphyrin-containing compound metabolism; protoporphyrin-IX biosynthesis; 5-aminolevulinate from L-glutamyl-tRNA(Glu): step 2/2. The chain is Glutamate-1-semialdehyde 2,1-aminomutase from Shewanella baltica (strain OS155 / ATCC BAA-1091).